We begin with the raw amino-acid sequence, 323 residues long: tRNA U34 carboxymethyltransferase (323 aa).

Carboxy-S-adenosyl-L-methionine contacts are provided by residues K91, W105, K110, G130, 181–182 (IE), M196, Y200, and R315.

The protein belongs to the class I-like SAM-binding methyltransferase superfamily. CmoB family. In terms of assembly, homotetramer.

The enzyme catalyses carboxy-S-adenosyl-L-methionine + 5-hydroxyuridine(34) in tRNA = 5-carboxymethoxyuridine(34) in tRNA + S-adenosyl-L-homocysteine + H(+). Its function is as follows. Catalyzes carboxymethyl transfer from carboxy-S-adenosyl-L-methionine (Cx-SAM) to 5-hydroxyuridine (ho5U) to form 5-carboxymethoxyuridine (cmo5U) at position 34 in tRNAs. This Serratia proteamaculans (strain 568) protein is tRNA U34 carboxymethyltransferase.